Consider the following 543-residue polypeptide: CTP synthase (543 aa).

The segment at 1 to 265 (MTRYVFITGG…DREVLRHFGL (265 aa)) is amidoligase domain. Ser-13 provides a ligand contact to CTP. Ser-13 is a binding site for UTP. Position 14–19 (14–19 (SLGKGI)) interacts with ATP. Tyr-54 contributes to the L-glutamine binding site. Asp-71 provides a ligand contact to ATP. Residues Asp-71 and Glu-139 each contribute to the Mg(2+) site. Residues 146-148 (DIE), 186-191 (KTKPTQ), and Lys-222 contribute to the CTP site. Residues 186-191 (KTKPTQ) and Lys-222 each bind UTP. ATP is bound at residue Val-240. The Glutamine amidotransferase type-1 domain occupies 291–542 (TIAVVGKYTN…IEAAVKQMRL (252 aa)). Residue Gly-353 participates in L-glutamine binding. Cys-380 (nucleophile; for glutamine hydrolysis) is an active-site residue. L-glutamine contacts are provided by residues 381-384 (FGMQ), Glu-404, and Arg-470. Residues His-515 and Glu-517 contribute to the active site.

This sequence belongs to the CTP synthase family. As to quaternary structure, homotetramer.

The enzyme catalyses UTP + L-glutamine + ATP + H2O = CTP + L-glutamate + ADP + phosphate + 2 H(+). The catalysed reaction is L-glutamine + H2O = L-glutamate + NH4(+). It carries out the reaction UTP + NH4(+) + ATP = CTP + ADP + phosphate + 2 H(+). Its pathway is pyrimidine metabolism; CTP biosynthesis via de novo pathway; CTP from UDP: step 2/2. Allosterically activated by GTP, when glutamine is the substrate; GTP has no effect on the reaction when ammonia is the substrate. The allosteric effector GTP functions by stabilizing the protein conformation that binds the tetrahedral intermediate(s) formed during glutamine hydrolysis. Inhibited by the product CTP, via allosteric rather than competitive inhibition. Catalyzes the ATP-dependent amination of UTP to CTP with either L-glutamine or ammonia as the source of nitrogen. Regulates intracellular CTP levels through interactions with the four ribonucleotide triphosphates. The polypeptide is CTP synthase (Acidiphilium cryptum (strain JF-5)).